Here is a 72-residue protein sequence, read N- to C-terminus: Translation initiation factor IF-1 (72 aa).

The S1-like domain maps to 1–72; it reads MSKQTAIEQD…TKGRISFRYK (72 aa).

The protein belongs to the IF-1 family. In terms of assembly, component of the 30S ribosomal translation pre-initiation complex which assembles on the 30S ribosome in the order IF-2 and IF-3, IF-1 and N-formylmethionyl-tRNA(fMet); mRNA recruitment can occur at any time during PIC assembly.

The protein resides in the cytoplasm. Its function is as follows. One of the essential components for the initiation of protein synthesis. Stabilizes the binding of IF-2 and IF-3 on the 30S subunit to which N-formylmethionyl-tRNA(fMet) subsequently binds. Helps modulate mRNA selection, yielding the 30S pre-initiation complex (PIC). Upon addition of the 50S ribosomal subunit IF-1, IF-2 and IF-3 are released leaving the mature 70S translation initiation complex. The chain is Translation initiation factor IF-1 from Porphyromonas gingivalis (strain ATCC BAA-308 / W83).